We begin with the raw amino-acid sequence, 715 residues long: Metastasis-associated protein MTA1 (715 aa).

The region spanning 1-164 (MAANMYRVGD…PQQKTLLADK (164 aa)) is the BAH domain. An ELM2 domain is found at 165-276 (GEIRVGNRYQ…KAISALVPQG (112 aa)). A Glycyl lysine isopeptide (Lys-Gly) (interchain with G-Cter in ubiquitin) cross-link involves residue K182. The SANT domain maps to 283–335 (DEMEEWSASEANLFEEALEKYGKDFTDIQQDFLPWKSLTSIIEYYYMWKTTDR). S386 is subject to Phosphoserine. The GATA-type; atypical zinc finger occupies 393–420 (CESCYTTQSYQWYSWGPPNMQCRLCASC). The segment at 435–460 (RLDGERPGPNRSNMSPHGLPARSSGS) is disordered. Phosphoserine is present on residues S446 and S449. A Glycyl lysine isopeptide (Lys-Gly) (interchain with G-Cter in SUMO2 and SUMO3) cross-link involves residue K509. Position 522 is a phosphoserine (S522). Positions 545-552 (PRPPKPDP) match the SH3-binding motif. Residue K549 forms a Glycyl lysine isopeptide (Lys-Gly) (interchain with G-Cter in SUMO2) linkage. T564 is modified (phosphothreonine). S576 carries the phosphoserine modification. T578 is modified (phosphothreonine). K626 bears the N6-acetyllysine; alternate mark. K626 is covalently cross-linked (Glycyl lysine isopeptide (Lys-Gly) (interchain with G-Cter in ubiquitin); alternate). S639 is modified (phosphoserine). Residues 656–686 (DVFYMATEETRKIRKLLSSSETKRAARRPYK) are interaction with RBBP4. The disordered stretch occupies residues 673-715 (SSSETKRAARRPYKPIALRQSQALPPRPPPPAPVNDEPIVIED). Positions 696–705 (LPPRPPPPAP) match the SH3-binding motif. The SUMO interaction motif 1 (SIM); crucial for efficient sumoylation motif lies at 711-715 (IVIED).

This sequence belongs to the metastasis-associated protein family. As to quaternary structure, component of the nucleosome remodeling and deacetylase (NuRD) repressor complex, composed of core proteins MTA1, MTA2, MTA3, RBBP4, RBBP7, HDAC1, HDAC2, MBD2, MBD3, and peripherally associated proteins CDK2AP1, CDK2AP2, GATAD2A, GATAD2B, CHD3, CHD4 and CHD5. The exact stoichiometry of the NuRD complex is unknown, and some subunits such as MBD2 and MBD3, GATAD2A and GATAD2B, and CHD3, CHD4 and CHD5 define mutually exclusive NuRD complexes. Interacts with RBBP4; the interaction is direct. Interacts with BMAL1. Interacts with CLOCK. Interacts with COP1. Interacts with CSNK1G2 in the cytoplasm. Interacts with EP300. Interacts with HDAC2. Interacts with IFI16. Interacts with ITGB3BP/CENPR. Interacts with MBD3L2. Interacts with MDM2. Interacts with NACC2. Interacts with p53/TP53. Interacts with PIAS1. Interacts with PIAS3. Interacts with PIAS4. Interacts with PWWP2A. Interacts with PWWP2B. Interacts with SENP1. Interacts with SENP2. Interacts with SIX3; facilitates the binding of SIX3 to the core DNA motif of SIX3 promoter. Interacts with SUMO1. Interacts with SUMO2. Interacts with TFCP2L1; which is indispensable for TFCP2L1-mediated self-renewal-promoting effect and endoderm-inhibiting action. Interacts with TFAP2C. Interacts with TPR. Interacts with UBE2I/UBC9. In terms of processing, phosphorylation by CSNK1G2/CK1 triggered by estrogen enhances corepression of estrogen receptor (ER). Acetylation is essential for its transcriptional coactivator activity. Post-translationally, sumoylation positively regulates its transcriptional corepressor activity but does not affect the protein stability. Sumoylated preferentially by SUMO2 or SUMO3 than SUMO1. Sumoylation is enhanced by PIAS1/3/4 and preferentially sumoylated by SUMO2 in the presence of PIAS1/3/4. Desumoylated by SENP1. In terms of processing, ubiquitinated by COP1, which leads to proteasomal degradation. As to expression, widely expressed. High expression in brain, liver, kidney, and cardiac muscle, ovaries, adrenal glands and virgin mammary glands. Higher in tumors than in adjacent normal tissue from the same individual. Up-regulated in a wide variety of cancers including breast, liver, ovarian, and colorectal cancer and its expression levels are closely correlated with tumor aggressiveness and metastasis.

Its subcellular location is the nucleus. The protein localises to the cytoplasm. It localises to the nucleus envelope. It is found in the cytoskeleton. Transcriptional coregulator which can act as both a transcriptional corepressor and coactivator. Acts as a component of the histone deacetylase NuRD complex which participates in the remodeling of chromatin. In the NuRD complex, regulates transcription of its targets by modifying the acetylation status of the target chromatin and cofactor accessibility to the target DNA. In conjunction with other components of NuRD, acts as a transcriptional corepressor of BRCA1, ESR1, TFF1 and CDKN1A. Acts as a transcriptional coactivator of BCAS3, and SUMO2, independent of the NuRD complex. Stimulates the expression of WNT1 by inhibiting the expression of its transcriptional corepressor SIX3. Regulates p53-dependent and -independent DNA repair processes following genotoxic stress. Regulates the stability and function of p53/TP53 by inhibiting its ubiquitination by COP1 and MDM2 thereby regulating the p53-dependent DNA repair. Plays a role in the regulation of the circadian clock and is essential for the generation and maintenance of circadian rhythms under constant light and for normal entrainment of behavior to light-dark (LD) cycles. Positively regulates the CLOCK-BMAL1 heterodimer mediated transcriptional activation of its own transcription and the transcription of CRY1. Regulates deacetylation of BMAL1 by regulating SIRT1 expression, resulting in derepressing CRY1-mediated transcription repression. With TFCP2L1, promotes establishment and maintenance of pluripotency in embryonic stem cells (ESCs) and inhibits endoderm differentiation. Its function is as follows. Binds to ESR1 and sequesters it in the cytoplasm and enhances its non-genomic responses. This chain is Metastasis-associated protein MTA1 (MTA1), found in Homo sapiens (Human).